The primary structure comprises 470 residues: Cytochrome P450 monooxygenase FUM2 (470 aa).

Cys414 is a heme binding site.

The protein belongs to the cytochrome P450 family. Requires heme as cofactor.

Its pathway is mycotoxin biosynthesis. In terms of biological role, cytochrome P450 monooxygenase; part of the gene cluster that mediates the biosynthesis of fumonisins B1 (FB1), B2 (FB2), B3 (FB3), and B4 (FB4), which are carcinogenic mycotoxins. Within the pathway, FUM2 performs the C-10 hydroxylation present in FB2 and FB4 and which occurs early in the biosynthesis. The biosynthesis starts with the FUM1-catalyzed carbon chain assembly from one molecule of acetyl-CoA, eight molecules of malonyl-CoA, and two molecules of methionine (in S-adenosyl form). The C18 polyketide chain is released from the enzyme by a nucleophilic attack of a carbanion, which is derived from R-carbon of alanine by decarboxylation, on the carbonyl carbon of polyketide acyl chain. This step is catalyzed by the pyridoxal 5'-phosphate-dependent aminoacyl transferase FUM8. The resultant 3-keto intermediate is then stereospecifically reduced to a 3-hydroxyl product by reductase FUM13. Subsequent oxidations at C-10 by the cytochrome P450 monooxygenase FUM2, C-14 and C-15 by FUM6, FUM12 or FUM15, tricarballylic esterification of the hydroxyl groups on C-14 and C-15 by acyltransferase FUM14, and C-5 hydroxylation by 2-keto-glutarate-dependent dioxygenase FUM3 furnish the biosynthesis of fumonisins. The tricarballylic moieties are most likely derived from the citric acid cycle, and their addition to the carbon backbone may involve FUM7, FUM10, FUM11 and FUM14. In Gibberella moniliformis (strain M3125 / FGSC 7600) (Maize ear and stalk rot fungus), this protein is Cytochrome P450 monooxygenase FUM2.